Reading from the N-terminus, the 271-residue chain is DNA repair protein RecO (271 aa).

Positions 249 to 264 (VRVEDSVRQDGDRDST) are enriched in basic and acidic residues. The segment at 249–271 (VRVEDSVRQDGDRDSTTRTSSPA) is disordered.

The protein belongs to the RecO family.

Functionally, involved in DNA repair and RecF pathway recombination. This chain is DNA repair protein RecO, found in Rhodococcus jostii (strain RHA1).